The chain runs to 619 residues: DEAD-box ATP-dependent RNA helicase 35B (619 aa).

Composition is skewed to low complexity over residues 1–10 and 49–58; these read MAAAAAAAAA and PPTTNAVAVA. Residues 1–72 are disordered; the sequence is MAAAAAAAAA…PPRSTSSPAV (72 aa). The short motif at 173 to 201 is the Q motif element; it reads RSFGDLRLPEPILRALRGKGIEKPTPIQV. The region spanning 204–388 is the Helicase ATP-binding domain; that stretch reads LPVALSGRDM…KSALVKPIIV (185 aa). Residue 217–224 coordinates ATP; it reads AFTGSGKT. Residues 336–339 carry the DEAD box motif; it reads DEAD. The region spanning 399–559 is the Helicase C-terminal domain; sequence DVIQEVEYVK…RLPPILADLD (161 aa). The CCHC-type zinc-finger motif lies at 576-593; the sequence is KGCAFCGGLGHRIEACPK.

This sequence belongs to the DEAD box helicase family. DDX41 subfamily.

The catalysed reaction is ATP + H2O = ADP + phosphate + H(+). This is DEAD-box ATP-dependent RNA helicase 35B from Oryza sativa subsp. japonica (Rice).